The sequence spans 117 residues: Large ribosomal subunit protein uL18 (117 aa).

The protein belongs to the universal ribosomal protein uL18 family. Part of the 50S ribosomal subunit; part of the 5S rRNA/L5/L18/L25 subcomplex. Contacts the 5S and 23S rRNAs.

Its function is as follows. This is one of the proteins that bind and probably mediate the attachment of the 5S RNA into the large ribosomal subunit, where it forms part of the central protuberance. The chain is Large ribosomal subunit protein uL18 from Proteus mirabilis (strain HI4320).